The sequence spans 372 residues: Probable basic-leucine zipper transcription factor G (372 aa).

2 disordered regions span residues 1-20 (MLSV…QQQQ) and 176-234 (TTNN…EKFE). 2 stretches are compositionally biased toward low complexity: residues 11–20 (QQPQQQQQQQ) and 176–215 (TTNN…KSNT). Over residues 223 to 234 (IRNSNSTFEKFE) the composition is skewed to polar residues. A bZIP domain is found at 277 to 340 (ELKRQKRLIK…LILKAEVGQL (64 aa)). Residues 279–301 (KRQKRLIKNRESAHLSRQRKRER) form a basic motif region. Residues 305 to 340 (LEHRVEELSSNSIDINKTLSSLENENLILKAEVGQL) form a leucine-zipper region.

The protein belongs to the bZIP family.

The protein resides in the nucleus. Probable transcriptional regulator. The polypeptide is Probable basic-leucine zipper transcription factor G (bzpG) (Dictyostelium discoideum (Social amoeba)).